The sequence spans 156 residues: Transcription elongation factor GreA (156 aa).

Positions 45-66 (NAEYHSAKEKQSFIEGRIKELE) form a coiled coil.

The protein belongs to the GreA/GreB family.

Necessary for efficient RNA polymerase transcription elongation past template-encoded arresting sites. The arresting sites in DNA have the property of trapping a certain fraction of elongating RNA polymerases that pass through, resulting in locked ternary complexes. Cleavage of the nascent transcript by cleavage factors such as GreA or GreB allows the resumption of elongation from the new 3'terminus. GreA releases sequences of 2 to 3 nucleotides. The polypeptide is Transcription elongation factor GreA (Jannaschia sp. (strain CCS1)).